Here is a 312-residue protein sequence, read N- to C-terminus: MESALPAAGFLYWVGAGTVAYLALRISYSLFTALRVWGVGNEAGVGPGLGEWAVVTGGTDGIGKSYAEELAKRGMKVVLISRSQDKLDQVSSEIKEKFKVETRTIAVDFTLEDIYDKIKTGLAGLEIGILVNNVGMSYEYPEYFLDVPDLDNVIKKMININILSVCKMTQLVLPGMVERSKGAILNISSGSGMFPVPLLTIYSATKTFVDFFSQCLHEEYRSKGIFVQSVLPYFVATKLAKIRKPTLDKPTPETFVKSAIKTVGLQSRTNGYLIHVLMGWIISNLPSWIYLKIAMNMNKATRVHYLKKIKKN.

A helical membrane pass occupies residues 4–24 (ALPAAGFLYWVGAGTVAYLAL). Residue 50 to 79 (GEWAVVTGGTDGIGKSYAEELAKRGMKVVL) participates in NADP(+) binding. 2 consecutive transmembrane segments (helical) span residues 182–202 (GAIL…LTIY) and 271–291 (GYLI…WIYL). Serine 189 lines the substrate pocket. Tyrosine 202 functions as the Proton acceptor in the catalytic mechanism. The Di-lysine motif motif lies at 308–312 (KIKKN).

It belongs to the short-chain dehydrogenases/reductases (SDR) family. 17-beta-HSD 3 subfamily.

The protein localises to the endoplasmic reticulum membrane. The enzyme catalyses a very-long-chain (3R)-3-hydroxyacyl-CoA + NADP(+) = a very-long-chain 3-oxoacyl-CoA + NADPH + H(+). It carries out the reaction 17beta-estradiol + NAD(+) = estrone + NADH + H(+). It catalyses the reaction 17beta-estradiol + NADP(+) = estrone + NADPH + H(+). The catalysed reaction is 3-oxooctadecanoyl-CoA + NADPH + H(+) = (3R)-hydroxyoctadecanoyl-CoA + NADP(+). The enzyme catalyses (7Z,10Z,13Z,16Z)-3-oxodocosatetraenoyl-CoA + NADPH + H(+) = (3R)-hydroxy-(7Z,10Z,13Z,16Z)-docosatetraenoyl-CoA + NADP(+). It carries out the reaction 3-oxo-(7Z,10Z,13Z,16Z,19Z)-docosapentaenoyl-CoA + NADPH + H(+) = (3R)-hydroxy-(7Z,10Z,13Z,16Z,19Z)-docosapentaenoyl-CoA + NADP(+). It catalyses the reaction (8Z,11Z,14Z)-3-oxoeicosatrienoyl-CoA + NADPH + H(+) = (3R)-hydroxy-(8Z,11Z,14Z)-eicosatrienoyl-CoA + NADP(+). Its pathway is lipid metabolism; fatty acid biosynthesis. The protein operates within steroid biosynthesis; estrogen biosynthesis. Its function is as follows. Catalyzes the second of the four reactions of the long-chain fatty acids elongation cycle. This endoplasmic reticulum-bound enzymatic process, allows the addition of two carbons to the chain of long- and very long-chain fatty acids/VLCFAs per cycle. This enzyme has a 3-ketoacyl-CoA reductase activity, reducing 3-ketoacyl-CoA to 3-hydroxyacyl-CoA, within each cycle of fatty acid elongation. Thereby, it may participate in the production of VLCFAs of different chain lengths that are involved in multiple biological processes as precursors of membrane lipids and lipid mediators. May also catalyze the transformation of estrone (E1) into estradiol (E2) and play a role in estrogen formation. This is Very-long-chain 3-oxoacyl-CoA reductase (HSD17B12) from Macaca fascicularis (Crab-eating macaque).